Here is a 472-residue protein sequence, read N- to C-terminus: Diaminopimelate decarboxylase (472 aa).

The tract at residues 1 to 23 (MNVHTAGPRHAEKTRHTATPQRV) is disordered. Position 97 is an N6-(pyridoxal phosphate)lysine (K97). Pyridoxal 5'-phosphate is bound by residues G283 and 325-328 (EPGR). Substrate is bound by residues R328, R369, and Y373. Catalysis depends on C400, which acts as the Proton donor. Substrate contacts are provided by E401 and Y430. A pyridoxal 5'-phosphate-binding site is contributed by Y430.

This sequence belongs to the Orn/Lys/Arg decarboxylase class-II family. LysA subfamily. In terms of assembly, homodimer. Pyridoxal 5'-phosphate serves as cofactor.

It carries out the reaction meso-2,6-diaminopimelate + H(+) = L-lysine + CO2. It participates in amino-acid biosynthesis; L-lysine biosynthesis via DAP pathway; L-lysine from DL-2,6-diaminopimelate: step 1/1. Functionally, specifically catalyzes the decarboxylation of meso-diaminopimelate (meso-DAP) to L-lysine. The chain is Diaminopimelate decarboxylase from Mycobacterium leprae (strain TN).